The primary structure comprises 156 residues: MNILMLTFIICGLLTRVTKGSFEPQKCWKNNVGHCRRRCLDTERYILLCRNKLSCCISIISHEYTRRPAFPVIHLEDITLDYSDVDSFTGSPVSMLNDLITFDTTKFGETMTPETNTPETTMPPSEATTPETTMPPSETATSETMPPPSQTALTHN.

The N-terminal stretch at 1–20 (MNILMLTFIICGLLTRVTKG) is a signal peptide. 3 disulfides stabilise this stretch: cysteine 27-cysteine 55, cysteine 35-cysteine 49, and cysteine 39-cysteine 56. A propeptide spanning residues 68-156 (PAFPVIHLED…PPSQTALTHN (89 aa)) is cleaved from the precursor. A disordered region spans residues 108 to 156 (GETMTPETNTPETTMPPSEATTPETTMPPSETATSETMPPPSQTALTHN). Residues 109–144 (ETMTPETNTPETTMPPSEATTPETTMPPSETATSET) are compositionally biased toward low complexity.

This sequence belongs to the beta-defensin family.

Its subcellular location is the secreted. In terms of biological role, has antibacterial activity. This is Beta-defensin 125 (DEFB125) from Homo sapiens (Human).